A 701-amino-acid polypeptide reads, in one-letter code: Elongation factor G (701 aa).

Residues 11–287 enclose the tr-type G domain; the sequence is SRVRNFGIMA…AVVDYLPSPL (277 aa). GTP is bound by residues 20–27, 84–88, and 138–141; these read AHIDAGKT, DTPGH, and NKMD.

Belongs to the TRAFAC class translation factor GTPase superfamily. Classic translation factor GTPase family. EF-G/EF-2 subfamily.

Its subcellular location is the cytoplasm. In terms of biological role, catalyzes the GTP-dependent ribosomal translocation step during translation elongation. During this step, the ribosome changes from the pre-translocational (PRE) to the post-translocational (POST) state as the newly formed A-site-bound peptidyl-tRNA and P-site-bound deacylated tRNA move to the P and E sites, respectively. Catalyzes the coordinated movement of the two tRNA molecules, the mRNA and conformational changes in the ribosome. This is Elongation factor G (fusA) from Mycobacterium tuberculosis (strain CDC 1551 / Oshkosh).